Consider the following 280-residue polypeptide: Ribulose-phosphate 3-epimerase, chloroplastic (280 aa).

The transit peptide at 1-45 (SLGSSTLLQSQISGFGGSQKLQKISFSNPNSLTFTRRRIQTVVNA) directs the protein to the chloroplast. Serine 62 serves as a coordination point for substrate. Histidine 87, aspartate 89, and histidine 120 together coordinate a divalent metal cation. Aspartate 89 functions as the Proton acceptor in the catalytic mechanism. Residues histidine 120, 198–201 (GFGG), 231–233 (DGG), and 253–254 (GS) each bind substrate. A divalent metal cation is bound at residue aspartate 231. The Proton donor role is filled by aspartate 231.

This sequence belongs to the ribulose-phosphate 3-epimerase family. In terms of assembly, homohexamer. Co(2+) serves as cofactor. The cofactor is Fe(2+). Requires Mn(2+) as cofactor. It depends on Zn(2+) as a cofactor. Highest level of expression in leaves, whereas it is low in roots, tubers, and stems.

It localises to the plastid. The protein resides in the chloroplast thylakoid membrane. It catalyses the reaction D-ribulose 5-phosphate = D-xylulose 5-phosphate. It functions in the pathway carbohydrate biosynthesis; Calvin cycle. Catalyzes the reversible epimerization of D-ribulose 5-phosphate to D-xylulose 5-phosphate. This Solanum tuberosum (Potato) protein is Ribulose-phosphate 3-epimerase, chloroplastic.